We begin with the raw amino-acid sequence, 489 residues long: Potassium voltage-gated channel subfamily A member 7 (489 aa).

The chain crosses the membrane as a helical span at residues 176–196; it reads VLAVVSVLVILVSIVVFCLET. An N-linked (GlcNAc...) asparagine glycan is attached at Asn224. The chain crosses the membrane as a helical span at residues 242 to 262; it reads FFVVETLCICWFSFELLVRLV. Residue Cys264 is the site of S-palmitoyl cysteine attachment. The helical transmembrane segment at 274 to 294 threads the bilayer; it reads VMNLIDFVAILPYFVALGTEL. A helical; Voltage-sensor membrane pass occupies residues 309–328; that stretch reads ILRVIRLVRVFRIFKLSRHS. A helical membrane pass occupies residues 345-365; sequence LGLLIFFLFIGVVLFSSAVYF. The Selectivity filter signature appears at 391–396; that stretch reads TVGYGD. A helical membrane pass occupies residues 406–426; that stretch reads IVGSLCAIAGVLTISLPVPVI.

It belongs to the potassium channel family. A (Shaker) (TC 1.A.1.2) subfamily. Kv1.7/KCNA7 sub-subfamily. Heterotetramer of potassium channel proteins. As to expression, detected in heart, skeletal muscle, brain, and pancreatic islet cells.

It is found in the membrane. The catalysed reaction is K(+)(in) = K(+)(out). Its function is as follows. Mediates the voltage-dependent potassium ion permeability of excitable membranes. Assuming opened or closed conformations in response to the voltage difference across the membrane, the protein forms a potassium-selective channel through which potassium ions may pass in accordance with their electrochemical gradient. Channels formed by isoform 1 inactivate faster than channels formed by isoform 2. The protein is Potassium voltage-gated channel subfamily A member 7 (Kcna7) of Mus musculus (Mouse).